Reading from the N-terminus, the 562-residue chain is Alpha-1D adrenergic receptor (562 aa).

The Extracellular portion of the chain corresponds to 1–90 (MTFRDILSVT…VGGLVVSAQG (90 aa)). 2 disordered regions span residues 13-44 (GPRA…GVPG) and 50-69 (AVVG…EAGA). Positions 21–44 (GGSGAGGGAGTVGPEGPAVGGVPG) are enriched in gly residues. Residues asparagine 60 and asparagine 76 are each glycosylated (N-linked (GlcNAc...) asparagine). A helical membrane pass occupies residues 91 to 115 (VGVGVFLAAFILTAVAGNLLVILSV). Residues 116–127 (ACNRHLQTVTNY) are Cytoplasmic-facing. A helical transmembrane segment spans residues 128–153 (FIVNLAVADLLLSAAVLPFSATMEVL). The Extracellular segment spans residues 154 to 163 (GFWPFGRTFC). Residues 164–186 (DVWAAVDVLCCTASILSLCTISV) form a helical membrane-spanning segment. At 187 to 207 (DRYVGVRHSLKYPAIMTERKA) the chain is on the cytoplasmic side. The chain crosses the membrane as a helical span at residues 208 to 232 (AAILALLWAVALVVSVGPLLGWKEP). At 233–245 (VPPDERFCGITEE) the chain is on the extracellular side. A helical transmembrane segment spans residues 246-269 (VGYAIFSSVCSFYLPMAVIVVMYC). The Cytoplasmic portion of the chain corresponds to 270–342 (RVYVVARSTT…KFSREKKAAK (73 aa)). A helical membrane pass occupies residues 343 to 367 (TLAIVVGVFVLCWFPFFFVLPLGSL). Residues 368–374 (FPQLKPS) are Extracellular-facing. A helical membrane pass occupies residues 375 to 399 (EGVFKVIFWLGYFNSCVNPLIYPCS). Residues 400–562 (SREFKRAFLR…DLSNLRETDI (163 aa)) are Cytoplasmic-facing. Cysteine 413 is lipidated: S-palmitoyl cysteine. The segment at 444–472 (QPAHRTPRGSPSPHCTPRPGLRRHAGGAG) is disordered.

It belongs to the G-protein coupled receptor 1 family. Adrenergic receptor subfamily. ADRA1D sub-subfamily. In terms of assembly, interacts with FLNA (via filamin repeat 21); increases PKA-mediated phosphorylation of FLNA. In terms of processing, palmitoylated. Palmitoylation by ZDHHC21 may increase the expression of the receptor and regulate downstream signaling.

Its subcellular location is the cell membrane. This alpha-adrenergic receptor mediates its effect through the influx of extracellular calcium. This Mus musculus (Mouse) protein is Alpha-1D adrenergic receptor (Adra1d).